Here is a 117-residue protein sequence, read N- to C-terminus: Hemerythrin subunit alpha (117 aa).

Residues His24, His53, Glu57, His72, His76, His105, and Asp110 each contribute to the Fe cation site.

This sequence belongs to the hemerythrin family. As to quaternary structure, octamer composed of two types of chains: alpha and beta.

Its function is as follows. Hemerythrin is a respiratory protein in blood cells of certain marine worms. The oxygen-binding site in each chain contains two iron atoms. This Lingula reevii (Inarticulated brachiopod) protein is Hemerythrin subunit alpha.